A 324-amino-acid chain; its full sequence is Putative 12-oxophytodienoate reductase-like protein 1 (324 aa).

Met-1 carries the N-acetylmethionine modification. FMN-binding positions include 14 to 16 (PMA), Ala-47, and Gln-89. The span at 99–113 (QDCQPNGESPVSSTD) shows a compositional bias: polar residues. The disordered stretch occupies residues 99–128 (QDCQPNGESPVSSTDKPFADDPSNEFTPPR). 160-163 (HGAH) provides a ligand contact to substrate. The Proton donor role is filled by Tyr-165. Arg-212 contributes to the FMN binding site. Arg-252 is a binding site for substrate. Residues Gly-282 and 303-304 (GR) contribute to the FMN site.

This sequence belongs to the NADH:flavin oxidoreductase/NADH oxidase family. The cofactor is FMN.

Putative oxophytodienoate reductase that may be involved in the biosynthesis or metabolism of oxylipin signaling molecules. The sequence is that of Putative 12-oxophytodienoate reductase-like protein 1 from Arabidopsis thaliana (Mouse-ear cress).